We begin with the raw amino-acid sequence, 314 residues long: Small ribosomal subunit protein uS2 (314 aa).

Basic and acidic residues-rich tracts occupy residues 244 to 265 and 271 to 287; these read GGHD…GHKD and DRRG…EDRA. Positions 244–314 are disordered; sequence GGHDERREQE…AAPEAAPAKE (71 aa). Low complexity predominate over residues 302-314; that stretch reads APAAAPEAAPAKE.

This sequence belongs to the universal ribosomal protein uS2 family.

This chain is Small ribosomal subunit protein uS2, found in Anaeromyxobacter dehalogenans (strain 2CP-C).